A 233-amino-acid chain; its full sequence is LexA repressor (233 aa).

The H-T-H motif DNA-binding region spans 26–46 (FDEMKEALDLRSKSGIHRLIT). Active-site for autocatalytic cleavage activity residues include Ser-154 and Lys-192.

The protein belongs to the peptidase S24 family. In terms of assembly, homodimer.

It catalyses the reaction Hydrolysis of Ala-|-Gly bond in repressor LexA.. Its function is as follows. Represses a number of genes involved in the response to DNA damage (SOS response), including recA and lexA. In the presence of single-stranded DNA, RecA interacts with LexA causing an autocatalytic cleavage which disrupts the DNA-binding part of LexA, leading to derepression of the SOS regulon and eventually DNA repair. The polypeptide is LexA repressor (Roseobacter denitrificans (strain ATCC 33942 / OCh 114) (Erythrobacter sp. (strain OCh 114))).